Here is a 185-residue protein sequence, read N- to C-terminus: Large ribosomal subunit protein uL22 (185 aa).

Belongs to the universal ribosomal protein uL22 family. As to quaternary structure, part of the 50S ribosomal subunit.

Its function is as follows. This protein binds specifically to 23S rRNA. It makes multiple contacts with different domains of the 23S rRNA in the assembled 50S subunit and ribosome. In terms of biological role, the globular domain of the protein is located near the polypeptide exit tunnel on the outside of the subunit, while an extended beta-hairpin is found that lines the wall of the exit tunnel in the center of the 70S ribosome. The polypeptide is Large ribosomal subunit protein uL22 (Pyrobaculum neutrophilum (strain DSM 2338 / JCM 9278 / NBRC 100436 / V24Sta) (Thermoproteus neutrophilus)).